A 359-amino-acid chain; its full sequence is Outer membrane protein P5 (359 aa).

The signal sequence occupies residues Met1–Ala21. The next 8 beta stranded transmembrane spans lie at Thr27–Gly37, Thr64–Ile75, Leu83–Asp91, His110–Glu121, Leu126–Val134, Gly164–Ala173, Leu178–Gln185, and Cys211–Arg219. Residues Met233 to Lys359 enclose the OmpA-like domain. A disulfide bridge connects residues Cys332 and Cys344.

This sequence belongs to the outer membrane OOP (TC 1.B.6) superfamily. OmpA family. As to quaternary structure, monomer and homodimer.

It is found in the cell outer membrane. The protein localises to the fimbrium. Acts as a fimbriae subunit, allowing adhesion to host cells. In terms of biological role, with TolR probably plays a role in maintaining the position of the peptidoglycan cell wall in the periplasm. Acts as a porin with low permeability that allows slow penetration of small solutes; an internal gate slows down solute passage. The chain is Outer membrane protein P5 from Haemophilus influenzae.